Here is a 420-residue protein sequence, read N- to C-terminus: 3-isopropylmalate dehydratase large subunit (420 aa).

Residues C300, C361, and C364 each contribute to the [4Fe-4S] cluster site.

It belongs to the aconitase/IPM isomerase family. LeuC type 2 subfamily. As to quaternary structure, heterodimer of LeuC and LeuD. Requires [4Fe-4S] cluster as cofactor.

The enzyme catalyses (2R,3S)-3-isopropylmalate = (2S)-2-isopropylmalate. The protein operates within amino-acid biosynthesis; L-leucine biosynthesis; L-leucine from 3-methyl-2-oxobutanoate: step 2/4. Catalyzes the isomerization between 2-isopropylmalate and 3-isopropylmalate, via the formation of 2-isopropylmaleate. This chain is 3-isopropylmalate dehydratase large subunit, found in Endomicrobium trichonymphae.